The chain runs to 394 residues: Bifunctional enzyme Fae/Hps (394 aa).

The formaldehyde-activating enzyme stretch occupies residues 1–162 (MEFRIGEALI…YEKDRSFHPF (162 aa)). His18 acts as the Proton donor in catalysis. The substrate site is built by Asp20, Leu49, Lys67, Thr69, and Gln84. The tract at residues 163–394 (VGRKLTKLWD…TDQFRIMTDF (232 aa)) is 3-hexulose-6-phosphate synthase.

It in the N-terminal section; belongs to the formaldehyde-activating enzyme family. The protein in the C-terminal section; belongs to the HPS/KGPDC family. HPS subfamily.

The catalysed reaction is 5,6,7,8-tetrahydromethanopterin + formaldehyde = 5,10-methylenetetrahydromethanopterin + H2O. It catalyses the reaction D-ribulose 5-phosphate + formaldehyde = D-arabino-hex-3-ulose 6-phosphate. It participates in carbohydrate biosynthesis; D-ribose 5-phosphate biosynthesis. Its function is as follows. Catalyzes the condensation of formaldehyde with tetrahydromethanopterin (H(4)MPT) to 5,10-methylenetetrahydromethanopterin. Functionally, catalyzes the reversible formation of ribulose-5-phosphate and formaldehyde from 3-hexulose-6-phosphate. The protein is Bifunctional enzyme Fae/Hps of Archaeoglobus fulgidus (strain ATCC 49558 / DSM 4304 / JCM 9628 / NBRC 100126 / VC-16).